A 437-amino-acid chain; its full sequence is Matrix remodeling-associated protein 8 (437 aa).

The N-terminal stretch at 1–22 (MEQLAKLLLWQLLLQQSSVVYL) is a signal peptide. Topologically, residues 23-339 (YSVPADASNP…PESRIHFFQQ (317 aa)) are extracellular. Ig-like V-type domains follow at residues 32 to 159 (PDSV…LDIT) and 167 to 294 (EYWD…VFVT). N-linked (GlcNAc...) asparagine glycans are attached at residues Asn41, Asn121, Asn246, and Asn304. 2 cysteine pairs are disulfide-bonded: Cys54–Cys139 and Cys188–Cys274. The chain crosses the membrane as a helical span at residues 340–360 (LGYVLATLLLFVVLLIIVVFI). Residues 361–437 (TRKRRQRGYE…DKDFRKEYCK (77 aa)) lie on the Cytoplasmic side of the membrane.

As to quaternary structure, homodimer in cis. Does not appear to form trans-homodimers.

The protein resides in the cell membrane. Its function is as follows. Transmembrane protein which can modulate activity of various signaling pathways, probably via binding to integrin ITGAV:ITGB3. Mediates heterophilic cell-cell interactions in vitro. The protein is Matrix remodeling-associated protein 8 (MXRA8) of Gallus gallus (Chicken).